Consider the following 249-residue polypeptide: Leucyl/phenylalanyl-tRNA--protein transferase (249 aa).

The protein belongs to the L/F-transferase family.

It is found in the cytoplasm. The catalysed reaction is N-terminal L-lysyl-[protein] + L-leucyl-tRNA(Leu) = N-terminal L-leucyl-L-lysyl-[protein] + tRNA(Leu) + H(+). It catalyses the reaction N-terminal L-arginyl-[protein] + L-leucyl-tRNA(Leu) = N-terminal L-leucyl-L-arginyl-[protein] + tRNA(Leu) + H(+). It carries out the reaction L-phenylalanyl-tRNA(Phe) + an N-terminal L-alpha-aminoacyl-[protein] = an N-terminal L-phenylalanyl-L-alpha-aminoacyl-[protein] + tRNA(Phe). Functionally, functions in the N-end rule pathway of protein degradation where it conjugates Leu, Phe and, less efficiently, Met from aminoacyl-tRNAs to the N-termini of proteins containing an N-terminal arginine or lysine. The protein is Leucyl/phenylalanyl-tRNA--protein transferase of Xanthomonas axonopodis pv. citri (strain 306).